Reading from the N-terminus, the 1248-residue chain is ABC transporter B family member 7 (1248 aa).

6 helical membrane-spanning segments follow: residues 32-52 (IVLM…QPFM), 82-102 (FLYL…CWMV), 158-175 (FTQL…AFIV), 179-201 (LTLA…TYIM), 261-281 (GLGI…AIWY), and 299-321 (VITS…NSFA). In terms of domain architecture, ABC transmembrane type-1 1 spans 35-322 (MVIGTLSAMA…TLPSLNSFAA (288 aa)). An ABC transporter 1 domain is found at 357-593 (IELRDVYFRY…PEGTYSQLVR (237 aa)). 392–399 (GQSGSGKS) lines the ATP pocket. N-linked (GlcNAc...) asparagine glycosylation is found at Asn473 and Asn652. The chain crosses the membrane as a helical span at residues 682 to 702 (VLLLGSLAAVIHGIVFPVQGL). In terms of domain architecture, ABC transmembrane type-1 2 spans 683–970 (LLLGSLAAVI…TSTMAPDINK (288 aa)). Asn720 carries N-linked (GlcNAc...) asparagine glycosylation. Residues 722–742 (SLFWALIFVALGLTDLIVIPL) form a helical membrane-spanning segment. Residue Asn779 is glycosylated (N-linked (GlcNAc...) asparagine). Helical transmembrane passes span 813–833 (IIGA…MALL), 834–854 (VAPV…GFGA), 914–934 (GSYL…SWLI), and 939–959 (ATFG…VGVT). One can recognise an ABC transporter 2 domain in the interval 1005-1242 (IELQHVSFRY…SGGAYASLVA (238 aa)). 1040–1047 (GESGSGKS) is an ATP binding site. Asn1094, Asn1193, and Asn1244 each carry an N-linked (GlcNAc...) asparagine glycan.

Belongs to the ABC transporter superfamily. ABCB family. Multidrug resistance exporter (TC 3.A.1.201) subfamily.

The protein localises to the membrane. This Arabidopsis thaliana (Mouse-ear cress) protein is ABC transporter B family member 7 (ABCB7).